The sequence spans 581 residues: Solute carrier family 15 member 3 (581 aa).

Positions 1 to 14 are enriched in basic and acidic residues; sequence MPAPRAREQPRVPG. The segment at 1–26 is disordered; sequence MPAPRAREQPRVPGERQPLLPRGARG. Residues 38-58 form a helical membrane-spanning segment; the sequence is VLLVEMLERAAFFGVTANLVL. N-linked (GlcNAc...) asparagine glycosylation is found at asparagine 61 and asparagine 66. 3 helical membrane-spanning segments follow: residues 76-96, 103-123, and 155-175; these read ALVF…LADV, AVAL…ATAF, and PYCA…ASSV. N-linked (GlcNAc...) asparagine glycosylation occurs at asparagine 178. A helical transmembrane segment spans residues 200-220; sequence NWFYWSINLGAVLSLLVVAFI. N-linked (GlcNAc...) asparagine glycosylation occurs at asparagine 223. The next 2 membrane-spanning stretches (helical) occupy residues 232 to 252 and 310 to 330; these read IPVG…PVFI and FQVL…WMVY. Asparagine 356 carries an N-linked (GlcNAc...) asparagine glycan. Helical transmembrane passes span 369–389 and 411–431; these read TIPE…LVPL and MALG…LEME. Residue asparagine 439 is glycosylated (N-linked (GlcNAc...) asparagine). Transmembrane regions (helical) follow at residues 458–478, 497–517, and 540–560; these read IWWQ…ASIP, GIFF…VALL, and LYFF…VWIA.

The protein belongs to the major facilitator superfamily. Proton-dependent oligopeptide transporter (POT/PTR) (TC 2.A.17) family.

The protein resides in the lysosome membrane. It is found in the endosome membrane. It catalyses the reaction glycylglycylglycine(out) + n H(+)(out) = glycylglycylglycine(in) + n H(+)(in). The catalysed reaction is carnosine(out) + n H(+)(out) = carnosine(in) + n H(+)(in). The enzyme catalyses L-histidine(out) + n H(+)(out) = L-histidine(in) + n H(+)(in). It carries out the reaction N-acetyl-D-muramoyl-L-alanyl-D-isoglutamine(out) + n H(+)(out) = N-acetyl-D-muramoyl-L-alanyl-D-isoglutamine(in) + n H(+)(in). Its function is as follows. Proton-coupled amino-acid transporter that transports free histidine and certain di- and tripeptides, and is involved in innate immune response. Also able to transport carnosine. Involved in the detection of microbial pathogens by toll-like receptors (TLRs) and NOD-like receptors (NLRs), probably by mediating transport of bacterial peptidoglycans across the endolysosomal membrane: catalyzes the transport of certain bacterial peptidoglycans, such as muramyl dipeptide (MDP), the NOD2 ligand. This Homo sapiens (Human) protein is Solute carrier family 15 member 3.